Here is a 690-residue protein sequence, read N- to C-terminus: Protein arginine N-methyltransferase 7 (690 aa).

2 consecutive SAM-dependent MTase PRMT-type domains span residues 5–355 (FQDS…FSLW) and 364–690 (KEPL…EEEQ).

This sequence belongs to the class I-like SAM-binding methyltransferase superfamily. Protein arginine N-methyltransferase family. PRMT7 subfamily.

Functionally, essential arginine methyltransferase that can both catalyze the formation of omega-N monomethylarginine (MMA) and symmetrical dimethylarginine (sDMA). Specifically mediates the symmetrical dimethylation of arginine residues in the small nuclear ribonucleoproteins SmD1 and SmD3. This chain is Protein arginine N-methyltransferase 7 (Art7), found in Anopheles gambiae (African malaria mosquito).